A 90-amino-acid polypeptide reads, in one-letter code: Small ribosomal subunit protein bS16 (90 aa).

Belongs to the bacterial ribosomal protein bS16 family.

This chain is Small ribosomal subunit protein bS16, found in Moorella thermoacetica (strain ATCC 39073 / JCM 9320).